A 407-amino-acid chain; its full sequence is Imidazolonepropionase (407 aa).

Residues His74 and His76 each contribute to the Fe(3+) site. 2 residues coordinate Zn(2+): His74 and His76. The 4-imidazolone-5-propanoate site is built by Arg83, Tyr146, and His179. Tyr146 is a binding site for N-formimidoyl-L-glutamate. A Fe(3+)-binding site is contributed by His244. His244 contacts Zn(2+). Gln247 contributes to the 4-imidazolone-5-propanoate binding site. Asp319 is a Fe(3+) binding site. Asp319 is a Zn(2+) binding site. Residues Asn321 and Gly323 each contribute to the N-formimidoyl-L-glutamate site. Thr324 contributes to the 4-imidazolone-5-propanoate binding site.

Belongs to the metallo-dependent hydrolases superfamily. HutI family. The cofactor is Zn(2+). Fe(3+) serves as cofactor.

It is found in the cytoplasm. It catalyses the reaction 4-imidazolone-5-propanoate + H2O = N-formimidoyl-L-glutamate. It participates in amino-acid degradation; L-histidine degradation into L-glutamate; N-formimidoyl-L-glutamate from L-histidine: step 3/3. Functionally, catalyzes the hydrolytic cleavage of the carbon-nitrogen bond in imidazolone-5-propanoate to yield N-formimidoyl-L-glutamate. It is the third step in the universal histidine degradation pathway. The polypeptide is Imidazolonepropionase (Salmonella agona (strain SL483)).